Here is a 1061-residue protein sequence, read N- to C-terminus: Ceruloplasmin (1061 aa).

The signal sequence occupies residues 1–19 (MKFLLLSTFIFLYSSLALA). 6 Plastocyanin-like domains span residues 20–199 (RDKH…LILC), 208–356 (KEKN…VRDC), 369–555 (HVRH…MKIC), 565–713 (RQKD…VNQC), 725–895 (GERT…LIVC), and 903–1057 (FSPK…VEQE). The Na(+) site is built by tyrosine 55, glycine 64, and tyrosine 67. Cu(2+)-binding residues include histidine 120 and histidine 122. Histidine 120 lines the O2 pocket. Lysine 128 is a binding site for Ca(2+). N-linked (GlcNAc...) asparagine glycosylation occurs at asparagine 138. Ca(2+) is bound by residues glutamine 143, aspartate 146, and aspartate 147. Residues cysteine 173 and cysteine 199 are joined by a disulfide bond. Positions 179 and 181 each coordinate Cu(2+). Histidine 179 contacts O2. N-linked (GlcNAc...) asparagine glycosylation is present at asparagine 226. Serine 255 serves as a coordination point for Na(+). Cysteine 275 and cysteine 356 are oxidised to a cystine. 3 residues coordinate Cu(2+): histidine 294, cysteine 337, and histidine 342. A glycan (N-linked (GlcNAc...) asparagine) is linked at asparagine 396. The Na(+) site is built by phenylalanine 407, glycine 416, and tyrosine 419. Cysteine 529 and cysteine 555 form a disulfide bridge. N-linked (GlcNAc...) asparagine glycosylation occurs at asparagine 583. Position 612 (serine 612) interacts with Na(+). Cysteine 632 and cysteine 713 are oxidised to a cystine. Cu(2+) is bound by residues histidine 651, cysteine 694, histidine 699, and methionine 704. The active-site Nucleophile; for glutathione peroxidase activity is the cysteine 694. Asparagine 757 carries N-linked (GlcNAc...) asparagine glycosylation. 3 residues coordinate Na(+): phenylalanine 762, glycine 771, and tyrosine 774. Cysteine 869 and cysteine 895 are disulfide-bonded. Asparagine 921 carries N-linked (GlcNAc...) asparagine glycosylation. A Na(+)-binding site is contributed by serine 950. Residues histidine 989, histidine 992, histidine 994, histidine 1034, cysteine 1035, histidine 1036, histidine 1040, and methionine 1045 each contribute to the Cu(2+) site. 2 residues coordinate O2: histidine 992 and histidine 994. Histidine 1036 contacts O2.

This sequence belongs to the multicopper oxidase family. Found in a complex with MPO and LTF; interacts directly with MPO and LTF, which allows Fe(3+) incorporation into LTF, activation of CP ferroxidase activity and protection of CP antioxidant properties by MPO. Cu(2+) serves as cofactor. As to expression, expressed in many tissues, including liver, eye and brain.

The protein resides in the secreted. The enzyme catalyses 4 Fe(2+) + O2 + 4 H(+) = 4 Fe(3+) + 2 H2O. It carries out the reaction 4 Cu(+) + O2 + 4 H(+) = 4 Cu(2+) + 2 H2O. The catalysed reaction is a hydroperoxide + 2 glutathione = an alcohol + glutathione disulfide + H2O. It catalyses the reaction 4 nitric oxide + O2 + 2 H2O = 4 nitrite + 4 H(+). The enzyme catalyses 2 glutathione + H2O2 = glutathione disulfide + 2 H2O. Multifunctional blue, copper-binding (6-7 atoms per molecule) glycoprotein. It has ferroxidase activity oxidizing Fe(2+) to Fe(3+) without releasing radical oxygen species. It is involved in iron transport across the cell membrane. Copper ions provide a large number of enzymatic activites. Oxidizes highly toxic ferrous ions to the ferric state for further incorporation onto apo-transferrins, catalyzes Cu(+) oxidation and promotes the oxidation of biogenic amines such as norepinephrin and serotonin. Provides Cu(2+) ions for the ascorbate-mediated deaminase degradation of the heparan sulfate chains of GPC1. Has glutathione peroxidase-like activity, can remove both hydrogen peroxide and lipid hydroperoxide in the presence of thiols. Also shows NO-oxidase and NO2 synthase activities that determine endocrine NO homeostasis. The polypeptide is Ceruloplasmin (Cp) (Mus musculus (Mouse)).